Reading from the N-terminus, the 111-residue chain is Elevenin (111 aa).

An N-terminal signal peptide occupies residues 1-24; the sequence is MAPSQKALLVLVLSMLLTASDSRA. Residues cysteine 29 and cysteine 38 are joined by a disulfide bond. The propeptide occupies 44–111; the sequence is KRGGDSLSVG…TEQLDRLLTL (68 aa).

The protein belongs to the elevenin family. As to quaternary structure, monomer. As to expression, expressed by the venom duct.

It is found in the secreted. In terms of biological role, may mimic the function of prey elevenin neuropeptide. In vivo, intracranial injection in mice induces hyperactivity. This chain is Elevenin, found in Conus ebraeus (Hebrew cone).